Here is a 771-residue protein sequence, read N- to C-terminus: Kojibiose phosphorylase (771 aa).

Position 358–359 (358–359) interacts with substrate; sequence WD. Glu498 (proton donor) is an active-site residue. 611 to 612 is a substrate binding site; that stretch reads KQ.

It belongs to the glycosyl hydrolase 65 family.

It catalyses the reaction kojibiose + phosphate = beta-D-glucose 1-phosphate + D-glucose. Its function is as follows. Catalyzes the reversible phosphorolysis of kojibiose into beta-D-glucose 1-phosphate (Glc1P) and D-glucose. This Caldanaerobacter subterraneus subsp. tengcongensis (strain DSM 15242 / JCM 11007 / NBRC 100824 / MB4) (Thermoanaerobacter tengcongensis) protein is Kojibiose phosphorylase (kojP).